The following is a 245-amino-acid chain: MVPWLGPDDPFPPVERALGATSGAPGLLAASGDLLPSRLIDAYRRGIFPWYSDGQPVLWWSPDPRMVLRPAEFKVAPSLRKTLRRVLREDAWEIRVDHDFASVMRACAQAPRRGQRGTWITADVVEAYSSLHRVGDAHSIETWFEGKRVGGLYGVSFGKMFFGESMFAEVTDASKMALAALVGHLRRHEIEMIDCQQNTSHLASLGGREITRKSFIAHVRASVEAPPIPWRFDKTALLEVVAPAS.

This sequence belongs to the L/F-transferase family.

Its subcellular location is the cytoplasm. It catalyses the reaction N-terminal L-lysyl-[protein] + L-leucyl-tRNA(Leu) = N-terminal L-leucyl-L-lysyl-[protein] + tRNA(Leu) + H(+). The catalysed reaction is N-terminal L-arginyl-[protein] + L-leucyl-tRNA(Leu) = N-terminal L-leucyl-L-arginyl-[protein] + tRNA(Leu) + H(+). It carries out the reaction L-phenylalanyl-tRNA(Phe) + an N-terminal L-alpha-aminoacyl-[protein] = an N-terminal L-phenylalanyl-L-alpha-aminoacyl-[protein] + tRNA(Phe). Functions in the N-end rule pathway of protein degradation where it conjugates Leu, Phe and, less efficiently, Met from aminoacyl-tRNAs to the N-termini of proteins containing an N-terminal arginine or lysine. The polypeptide is Leucyl/phenylalanyl-tRNA--protein transferase (Paraburkholderia phytofirmans (strain DSM 17436 / LMG 22146 / PsJN) (Burkholderia phytofirmans)).